Here is a 279-residue protein sequence, read N- to C-terminus: Protoheme IX farnesyltransferase (279 aa).

9 consecutive transmembrane segments (helical) span residues leucine 5–leucine 25, isoleucine 33–phenylalanine 53, leucine 84–glycine 103, leucine 108–leucine 125, isoleucine 133–glycine 153, alanine 159–tyrosine 179, alanine 201–tyrosine 221, leucine 222–isoleucine 242, and alanine 256–isoleucine 276.

It belongs to the UbiA prenyltransferase family. Protoheme IX farnesyltransferase subfamily.

The protein resides in the cell membrane. The catalysed reaction is heme b + (2E,6E)-farnesyl diphosphate + H2O = Fe(II)-heme o + diphosphate. It functions in the pathway porphyrin-containing compound metabolism; heme O biosynthesis; heme O from protoheme: step 1/1. Functionally, converts heme B (protoheme IX) to heme O by substitution of the vinyl group on carbon 2 of heme B porphyrin ring with a hydroxyethyl farnesyl side group. The protein is Protoheme IX farnesyltransferase of Pyrobaculum arsenaticum (strain DSM 13514 / JCM 11321 / PZ6).